Reading from the N-terminus, the 376-residue chain is Succinyl-diaminopimelate desuccinylase (376 aa).

H67 is a binding site for Zn(2+). D69 is an active-site residue. D100 lines the Zn(2+) pocket. E134 acts as the Proton acceptor in catalysis. Zn(2+)-binding residues include E135, E163, and H349.

Belongs to the peptidase M20A family. DapE subfamily. Homodimer. Requires Zn(2+) as cofactor. Co(2+) serves as cofactor.

The catalysed reaction is N-succinyl-(2S,6S)-2,6-diaminopimelate + H2O = (2S,6S)-2,6-diaminopimelate + succinate. Its pathway is amino-acid biosynthesis; L-lysine biosynthesis via DAP pathway; LL-2,6-diaminopimelate from (S)-tetrahydrodipicolinate (succinylase route): step 3/3. Its function is as follows. Catalyzes the hydrolysis of N-succinyl-L,L-diaminopimelic acid (SDAP), forming succinate and LL-2,6-diaminopimelate (DAP), an intermediate involved in the bacterial biosynthesis of lysine and meso-diaminopimelic acid, an essential component of bacterial cell walls. The polypeptide is Succinyl-diaminopimelate desuccinylase (Proteus mirabilis (strain HI4320)).